We begin with the raw amino-acid sequence, 1101 residues long: ATP-citrate synthase (1101 aa).

Positions 4–265 constitute an ATP-grasp domain; the sequence is KAISEQTGKE…LDAKSGASLK (262 aa). The ATP site is built by Lys-58, Arg-66, Gly-67, Pro-109, Val-111, and Glu-118. At Tyr-131 the chain carries Phosphotyrosine. Asp-216 is an ATP binding site. Asp-257, Ser-260, and Ala-262 together coordinate Mg(2+). Ser-263 is modified (phosphoserine). 5 residues coordinate citrate: Gly-309, Asn-346, Thr-348, Tyr-364, and Arg-379. Residues 441-457 show a composition bias toward low complexity; it reads ASGSTSTPAPSRTASFS. A disordered region spans residues 441-487; sequence ASGSTSTPAPSRTASFSESRADEVAPAKKAKPAMPQDSVPSPRSLQG. Thr-447 carries the post-translational modification Phosphothreonine. Ser-451 carries the post-translational modification Phosphoserine. Ser-455 carries the post-translational modification Phosphoserine; by PKA and PKB/AKT1 or PKB/AKT2 or BCKDK. 2 positions are modified to phosphoserine: Ser-459 and Ser-481. A compositionally biased stretch (polar residues) spans 478 to 487; it reads SVPSPRSLQG. 3 positions are modified to N6-acetyllysine; alternate: Lys-540, Lys-546, and Lys-554. Residues Lys-540, Lys-546, and Lys-554 each participate in a glycyl lysine isopeptide (Lys-Gly) (interchain with G-Cter in ubiquitin); alternate cross-link. Thr-639 bears the Phosphothreonine mark. Ser-663 carries the phosphoserine modification. The residue at position 682 (Tyr-682) is a Phosphotyrosine. His-760 acts as the Tele-phosphohistidine intermediate in catalysis. 779–789 contributes to the CoA binding site; sequence LKEAGVFVPRS. Ser-839 bears the Phosphoserine mark. 4 positions are modified to N6-acetyllysine: Lys-948, Lys-968, Lys-978, and Lys-1077. Phosphoserine is present on Ser-1100.

In the N-terminal section; belongs to the succinate/malate CoA ligase beta subunit family. It in the C-terminal section; belongs to the succinate/malate CoA ligase alpha subunit family. As to quaternary structure, homotetramer. Requires Mg(2+) as cofactor. In terms of processing, phosphorylated by PKA and GSK3 in a sequential manner; phosphorylation results in activation of its activity. Phosphorylation on Thr-447 and Ser-451 depends on the phosphorylation state of Ser-455. Phosphorylation on Ser-455 is decreased by prior phosphorylation on the other 2 residues. Phosphorylated at Ser-455 by BCKDK and dephosphorylated by protein phosphatase PPM1K. ISGylated. Post-translationally, acetylated at Lys-540, Lys-546 and Lys-554 by KAT2B/PCAF. Acetylation is promoted by glucose and stabilizes the protein, probably by preventing ubiquitination at the same sites. Acetylation promotes de novo lipid synthesis. Deacetylated by SIRT2. In terms of processing, ubiquitinated at Lys-540, Lys-546 and Lys-554 by the BCR(KLHL25) E3 ubiquitin ligase complex and UBR4, leading to its degradation. Ubiquitination is probably inhibited by acetylation at same site. BCR(KLHL25)-mediated degradation of ACLY promotes fatty acid oxidation and is required for differentiation of inducible regulatory T (iTreg) cells.

It is found in the cytoplasm. The protein localises to the cytosol. It carries out the reaction oxaloacetate + acetyl-CoA + ADP + phosphate = citrate + ATP + CoA. Its activity is regulated as follows. Phosphorylation results in activation of its activity. Glucose 6-phosphate, fructose 6-phosphate, fructose 2,6-bisphosphate, ribulose 5-phosphate, and fructose 1,6-bisphosphate also act as activators. In terms of biological role, catalyzes the cleavage of citrate into oxaloacetate and acetyl-CoA, the latter serving as common substrate in multiple biochemical reactions in protein, carbohydrate and lipid metabolism. The chain is ATP-citrate synthase (ACLY) from Homo sapiens (Human).